A 181-amino-acid chain; its full sequence is Adenylate kinase (181 aa).

An ATP-binding site is contributed by 10–15 (GAGKGT). Positions 30 to 59 (STGDLFRANIGEGTPLGLEAKSYIDAGKLV) are NMP. Residues T31, R36, 57 to 59 (KLV), 85 to 88 (GFPR), and Q92 contribute to the AMP site. The tract at residues 126–132 (ARGRADD) is LID. R127 lines the ATP pocket. Residues R129 and R140 each coordinate AMP. Position 166 (G166) interacts with ATP.

Belongs to the adenylate kinase family. Monomer.

The protein localises to the cytoplasm. It carries out the reaction AMP + ATP = 2 ADP. It functions in the pathway purine metabolism; AMP biosynthesis via salvage pathway; AMP from ADP: step 1/1. Its function is as follows. Catalyzes the reversible transfer of the terminal phosphate group between ATP and AMP. Plays an important role in cellular energy homeostasis and in adenine nucleotide metabolism. This Corynebacterium aurimucosum (strain ATCC 700975 / DSM 44827 / CIP 107346 / CN-1) (Corynebacterium nigricans) protein is Adenylate kinase.